Consider the following 100-residue polypeptide: Pancreatic trypsin inhibitor (100 aa).

The first 21 residues, 1–21, serve as a signal peptide directing secretion; sequence MKMSRLCLSVALLVLLGTLAA. A propeptide spanning residues 22–35 is cleaved from the precursor; the sequence is STPGCDTSNQAKAQ. The BPTI/Kunitz inhibitor domain maps to 40–90; the sequence is CLEPPYTGPCKARIIRYFYNAKAGLCQTFVYGGCRAKRNNFKSAEDCMRTC. Disulfide bonds link Cys40/Cys90, Cys49/Cys73, and Cys65/Cys86. Positions 94 to 100 are excised as a propeptide; the sequence is IGPWENL.

Its subcellular location is the secreted. Inhibits trypsin, kallikrein, chymotrypsin, and plasmin. The protein is Pancreatic trypsin inhibitor of Bos taurus (Bovine).